We begin with the raw amino-acid sequence, 442 residues long: Trigger factor (442 aa).

One can recognise a PPIase FKBP-type domain in the interval 176-259; the sequence is GDFISLSLYV…VNAVIEISSP (84 aa).

It belongs to the FKBP-type PPIase family. Tig subfamily.

The protein resides in the cytoplasm. It catalyses the reaction [protein]-peptidylproline (omega=180) = [protein]-peptidylproline (omega=0). Functionally, involved in protein export. Acts as a chaperone by maintaining the newly synthesized protein in an open conformation. Functions as a peptidyl-prolyl cis-trans isomerase. The polypeptide is Trigger factor (tig) (Chlamydia trachomatis serovar D (strain ATCC VR-885 / DSM 19411 / UW-3/Cx)).